The sequence spans 319 residues: NADH-quinone oxidoreductase subunit H 1 (319 aa).

The next 8 helical transmembrane spans lie at 8-28, 74-94, 107-127, 147-167, 179-199, 230-250, 258-278, and 297-317; these read LFNIFGILGTLLTLAALLIWI, LVFILAPTVVVIATLLAFAVI, IGLLFFLAMSSLSVYSVVLGG, LSYEVFMGLSLMGVVMLAGTF, MWFCIPQFLGLVVFLIAGIAE, FFVGEYLAILLISALIVTLFF, LPPLVWFFIKFSFFVLFFILL, and LMLPLALLNLVITGAVVLALD.

The protein belongs to the complex I subunit 1 family. As to quaternary structure, NDH-1 is composed of 14 different subunits. Subunits NuoA, H, J, K, L, M, N constitute the membrane sector of the complex.

The protein resides in the cell inner membrane. It carries out the reaction a quinone + NADH + 5 H(+)(in) = a quinol + NAD(+) + 4 H(+)(out). Functionally, NDH-1 shuttles electrons from NADH, via FMN and iron-sulfur (Fe-S) centers, to quinones in the respiratory chain. The immediate electron acceptor for the enzyme in this species is believed to be ubiquinone. Couples the redox reaction to proton translocation (for every two electrons transferred, four hydrogen ions are translocated across the cytoplasmic membrane), and thus conserves the redox energy in a proton gradient. This subunit may bind ubiquinone. This is NADH-quinone oxidoreductase subunit H 1 from Nitrosococcus oceani (strain ATCC 19707 / BCRC 17464 / JCM 30415 / NCIMB 11848 / C-107).